A 354-amino-acid chain; its full sequence is Major egg antigen (354 aa).

The interval 1–21 is disordered; it reads MSGGKQHNAVSIPVNREQRSF. 2 sHSP domains span residues 122–233 and 251–354; these read SVND…VAVR and AKGV…AITH.

Belongs to the small heat shock protein (HSP20) family.

This is Major egg antigen from Schistosoma mansoni (Blood fluke).